Here is a 426-residue protein sequence, read N- to C-terminus: DNA polymerase processivity factor component OPG148 (426 aa).

This sequence belongs to the orthopoxvirus OPG148 family. As to quaternary structure, interacts with the DNA polymerase catalytic subunit OPG071. Interacts with UDG/OPG116. Component of the uracil-DNA glycosylase(UDG)-OPG148-polymerase complex; OPG148 and UDG form a heterodimeric processivity factor that associates with OPG071 to form the processive polymerase holoenzyme. Interacts with OPG117.

Functionally, plays an essential role in viral DNA replication by acting as the polymerase processivity factor together with protein OPG116. Serves as a bridge which links the DNA polymerase OPG071 and the uracil DNA glycosylase. The chain is DNA polymerase processivity factor component OPG148 (OPG148) from Variola virus (isolate Human/India/Ind3/1967) (VARV).